We begin with the raw amino-acid sequence, 226 residues long: uncharacterized protein (226 aa).

2 disordered regions span residues 1–20 and 205–226; these read MGAERVGRAPGVNAKRAVQT and LDRKNTAIAQDKSERKKVQRDA.

This is an uncharacterized protein from Treponema pallidum (strain Nichols).